Consider the following 237-residue polypeptide: Ankyrin repeat protein 14 (237 aa).

ANK repeat units follow at residues 27 to 56 and 60 to 90; these read RGET…DVNI and NGYT…TLDC.

May be involved in virus-host protein interaction through the ankyrin repeats. The protein is Ankyrin repeat protein 14 of Vaccinia virus (strain Western Reserve) (VACV).